A 297-amino-acid chain; its full sequence is Tumor necrosis factor receptor superfamily member 27 (297 aa).

The Extracellular segment spans residues 1-138; it reads MDCQENEYRD…AHTVPPREAT (138 aa). TNFR-Cys repeat units lie at residues 2 to 41, 43 to 83, and 85 to 118; these read DCQE…DAHC, VCPP…NAIC, and DCLP…EVQC. 8 disulfides stabilise this stretch: C3-C15, C18-C31, C21-C41, C44-C58, C61-C75, C64-C83, C86-C104, and C107-C118. N-linked (GlcNAc...) asparagine glycans are attached at residues N74 and N77. A helical; Signal-anchor for type III membrane protein membrane pass occupies residues 139 to 159; that stretch reads LVALVGSLLVVFALAFLGLFF. At 160–297 the chain is on the cytoplasmic side; it reads LYCKQIFNRH…LYVPFEVPSL (138 aa).

Associates with TRAF1, TRAF3 and TRAF6.

It localises to the membrane. In terms of biological role, receptor for EDA isoform A2, but not for EDA isoform A1. Mediates the activation of the NF-kappa-B and JNK pathways. Activation seems to be mediated by binding to TRAF3 and TRAF6. The polypeptide is Tumor necrosis factor receptor superfamily member 27 (Eda2r) (Mus musculus (Mouse)).